The sequence spans 903 residues: Pentatricopeptide repeat-containing protein At3g02330, mitochondrial (903 aa).

A mitochondrion-targeting transit peptide spans 1 to 31; that stretch reads MAESLRLLHMTRSVVSFNRCLTEKISYRRVP. 20 PPR repeats span residues 47 to 81, 82 to 112, 113 to 143, 144 to 178, 179 to 213, 214 to 244, 245 to 279, 280 to 314, 346 to 380, 381 to 415, 416 to 446, 447 to 481, 482 to 515, 516 to 550, 567 to 601, 602 to 636, 637 to 667, 668 to 702, 703 to 738, and 739 to 769; these read STTN…GFRP, TTFV…MPLR, DVVS…MPVR, DVVS…GIEF, DGRT…GCDT, DVVA…IPEK, NSVS…NAGV, SQSI…DFAA, NRQS…GLGF, DEIS…SLSL, DVCV…MRRR, DAVS…RIEP, DEFT…GMAS, NSSV…ANVS, MCVS…GITP, DKFT…ELQS, DVYI…SLRR, DFVT…NIKP, NHVT…GLDP, and QLPH…MPFE. Residues 774–850 form a type E motif region; sequence IWRTLLGVCT…EPGCSWVELK (77 aa). A type E(+) motif region spans residues 851–881; that stretch reads DELHVFLVGDKAHPRWEEIYEELGLIYSEMK.

This sequence belongs to the PPR family. PCMP-E subfamily. As to quaternary structure, interacts with MORF1/RIP8.

The protein resides in the mitochondrion. Its function is as follows. Involved in C-to-U editing of mitochondrial RNA. Required for RNA editing at 8 sites in 6 different mRNAs in mitochondria. In Arabidopsis thaliana (Mouse-ear cress), this protein is Pentatricopeptide repeat-containing protein At3g02330, mitochondrial (PCMP-E90).